A 67-amino-acid chain; its full sequence is Protein AaeX (67 aa).

2 consecutive transmembrane segments (helical) span residues 9–29 (IFGLSFPPVFFELLVPLALFF) and 47–67 (PALFNTALYCCLFYLISCLFV).

The protein belongs to the AaeX family.

The protein resides in the cell membrane. This chain is Protein AaeX, found in Serratia marcescens.